A 452-amino-acid chain; its full sequence is COP9 signalosome complex subunit 11 (452 aa).

The 170-residue stretch at F205 to D374 folds into the PCI domain.

In terms of assembly, component of a COP9 signalosome-like (CSN) complex.

The protein localises to the cytoplasm. It is found in the nucleus. Component of the COP9 signalosome (CSN) complex that acts as an regulator of the ubiquitin (Ubl) conjugation pathway by mediating the deneddylation of the cullin subunit of SCF-type E3 ubiquitin-protein ligase complexes The CSN complex is involved in the regulation of the mating pheromone response. PCI8 may also be involved in transcriptional and translational control. This Candida glabrata (strain ATCC 2001 / BCRC 20586 / JCM 3761 / NBRC 0622 / NRRL Y-65 / CBS 138) (Yeast) protein is COP9 signalosome complex subunit 11 (PCI8).